Here is a 343-residue protein sequence, read N- to C-terminus: tRNA N6-adenosine threonylcarbamoyltransferase (343 aa).

2 residues coordinate Fe cation: His120 and His124. Substrate is bound by residues Val142 to Gly146, Asp175, Gly188, Asp192, and Asn281. Asp310 contributes to the Fe cation binding site.

Belongs to the KAE1 / TsaD family. Fe(2+) serves as cofactor.

The protein localises to the cytoplasm. The catalysed reaction is L-threonylcarbamoyladenylate + adenosine(37) in tRNA = N(6)-L-threonylcarbamoyladenosine(37) in tRNA + AMP + H(+). Functionally, required for the formation of a threonylcarbamoyl group on adenosine at position 37 (t(6)A37) in tRNAs that read codons beginning with adenine. Is involved in the transfer of the threonylcarbamoyl moiety of threonylcarbamoyl-AMP (TC-AMP) to the N6 group of A37, together with TsaE and TsaB. TsaD likely plays a direct catalytic role in this reaction. This is tRNA N6-adenosine threonylcarbamoyltransferase from Bacillus anthracis.